Reading from the N-terminus, the 120-residue chain is Ribonuclease P protein component (120 aa).

Belongs to the RnpA family. Consists of a catalytic RNA component (M1 or rnpB) and a protein subunit.

It carries out the reaction Endonucleolytic cleavage of RNA, removing 5'-extranucleotides from tRNA precursor.. In terms of biological role, RNaseP catalyzes the removal of the 5'-leader sequence from pre-tRNA to produce the mature 5'-terminus. It can also cleave other RNA substrates such as 4.5S RNA. The protein component plays an auxiliary but essential role in vivo by binding to the 5'-leader sequence and broadening the substrate specificity of the ribozyme. This Thioalkalivibrio sulfidiphilus (strain HL-EbGR7) protein is Ribonuclease P protein component.